A 282-amino-acid chain; its full sequence is GDT1-like protein 4 (282 aa).

An N-terminal signal peptide occupies residues 1–26 (MARRVSTTRLLLLLLLVAAAAAAAAA). 6 consecutive transmembrane segments (helical) span residues 67 to 87 (AGLG…VSEI), 106 to 126 (TVLS…TGLG), 138 to 158 (TNSA…YIAW), 189 to 209 (IFSR…FLAE), 227 to 247 (AVGV…FAVV), and 259 to 279 (GTVA…SYFY).

This sequence belongs to the GDT1 family.

It localises to the membrane. The chain is GDT1-like protein 4 from Oryza sativa subsp. japonica (Rice).